The following is a 964-amino-acid chain: Insulin receptor substrate 1 (964 aa).

The PH domain maps to 8 to 109 (GMALSGNLKK…WLDKLLVLQR (102 aa)). The IRS-type PTB domain maps to 122–236 (YDQVWQVVIQ…SAMSAKTESN (115 aa)). The segment at 249–268 (LSHEPMRKRSSSANEASKPI) is disordered. A phosphoserine mark is found at Ser286, Ser287, and Ser342. Tyr410 carries the phosphotyrosine; by INSR modification. Residues 410–413 (YIPM) carry the YXXM motif 1 motif. Residues 527–560 (ASNRSQSSIGKEGSSYGSSANRQKKSTSAPLLSL) are disordered. The span at 528 to 560 (SNRSQSSIGKEGSSYGSSANRQKKSTSAPLLSL) shows a compositional bias: polar residues. Ser554 bears the Phosphoserine mark. The YXXM motif 2 signature appears at 640 to 643 (YLEM). Residues 698-712 (EKWREQPSRSEEKKS) show a composition bias toward basic and acidic residues. The tract at residues 698 to 735 (EKWREQPSRSEEKKSNSPLNDNPFSLKPTNVESKSKSH) is disordered. The span at 713 to 729 (NSPLNDNPFSLKPTNVE) shows a compositional bias: polar residues. The residue at position 907 (Tyr907) is a Phosphotyrosine; by INSR. The segment at 921-964 (AKYLKRGSRESPPVSACPEDGNTYARIDFDQSDSSSSSSNIFNT) is disordered. Phosphoserine is present on residues Ser928 and Ser931. Tyr944 carries the phosphotyrosine; by INSR modification. The span at 952-964 (SDSSSSSSNIFNT) shows a compositional bias: low complexity.

As to quaternary structure, bindings to phosphatidylinositol 3-kinase and SHP2.

Its function is as follows. Activates phosphatidylinositol 3-kinase when bound to the regulatory p85 subunit. May mediate the control of various cellular processes by insulin-like peptides. When phosphorylated by the insulin receptor binds specifically to various cellular proteins containing SH2 domains. Involved in control of cell proliferation, cell size, and body and organ growth throughout development. Also has a role in a signaling pathway controlling the physiological response required to endure periods of low nutrient conditions. Insulin/insulin-like growth factor (IGF) signaling pathway has a role in regulating aging and is necessary in the ovary for vitellogenic maturation. In Drosophila sechellia (Fruit fly), this protein is Insulin receptor substrate 1.